Consider the following 319-residue polypeptide: Myoblast determination protein 1 (319 aa).

A Peptide (Met-Gly) (interchain with G-Cter in ubiquitin) cross-link involves residue M1. An N6-methyllysine; by EHMT2 modification is found at K104. Residues 109–160 (DRRKAATMRERRRLSKVNEAFETLKRCTSSNPNQRLPKVEILRNAIRYIEGL) form the bHLH domain. Disordered regions lie at residues 174–222 (AAAA…GARR) and 267–319 (PALL…YQVL). Polar residues predominate over residues 197–207 (SDASSPRSNCS). The segment covering 267–276 (PALLLADAPP) has biased composition (low complexity).

Efficient DNA binding requires dimerization with another bHLH protein. Seems to form active heterodimers with ITF-2. Interacts with SUV39H1. Interacts with DDX5. Interacts with CHD2. Interacts with TSC22D3. Interacts with SETD3. Interacts with P-TEFB complex; promotes the transcriptional activity of MYOD1 through its CDK9-mediated phosphorylation. Interacts with CSRP3. Interacts with NUPR1. In terms of processing, phosphorylated by CDK9. This phosphorylation promotes its function in muscle differentiation. Acetylated by a complex containing EP300 and PCAF. The acetylation is essential to activate target genes. Conversely, its deacetylation by SIRT1 inhibits its function. Post-translationally, ubiquitinated on the N-terminus; which is required for proteasomal degradation. In terms of processing, methylation at Lys-104 by EHMT2/G9a inhibits myogenic activity.

It is found in the nucleus. In terms of biological role, acts as a transcriptional activator that promotes transcription of muscle-specific target genes and plays a role in muscle differentiation. Together with MYF5 and MYOG, co-occupies muscle-specific gene promoter core region during myogenesis. Induces fibroblasts to differentiate into myoblasts. Interacts with and is inhibited by the twist protein. This interaction probably involves the basic domains of both proteins. This chain is Myoblast determination protein 1 (MYOD1), found in Ovis aries (Sheep).